A 278-amino-acid polypeptide reads, in one-letter code: Acyl-[acyl-carrier-protein]--UDP-N-acetylglucosamine O-acyltransferase (278 aa).

The protein belongs to the transferase hexapeptide repeat family. LpxA subfamily. Homotrimer.

It is found in the cytoplasm. It carries out the reaction a (3R)-hydroxyacyl-[ACP] + UDP-N-acetyl-alpha-D-glucosamine = a UDP-3-O-[(3R)-3-hydroxyacyl]-N-acetyl-alpha-D-glucosamine + holo-[ACP]. The protein operates within glycolipid biosynthesis; lipid IV(A) biosynthesis; lipid IV(A) from (3R)-3-hydroxytetradecanoyl-[acyl-carrier-protein] and UDP-N-acetyl-alpha-D-glucosamine: step 1/6. Its function is as follows. Involved in the biosynthesis of lipid A, a phosphorylated glycolipid that anchors the lipopolysaccharide to the outer membrane of the cell. The polypeptide is Acyl-[acyl-carrier-protein]--UDP-N-acetylglucosamine O-acyltransferase (Brucella anthropi (strain ATCC 49188 / DSM 6882 / CCUG 24695 / JCM 21032 / LMG 3331 / NBRC 15819 / NCTC 12168 / Alc 37) (Ochrobactrum anthropi)).